A 188-amino-acid chain; its full sequence is Dual specificity protein phosphatase 18 (188 aa).

One can recognise a Tyrosine-protein phosphatase domain in the interval 19-160 (GLSQITKSLY…LIHYEFQLFG (142 aa)). The tract at residues 95–141 (MKQGRTLLHCAAGVSRSAALCLAYLMKYHAMSLLDAHTWTKSCRPII) is sufficient for mitochondrial localization. Catalysis depends on Cys-104, which acts as the Phosphocysteine intermediate.

This sequence belongs to the protein-tyrosine phosphatase family. Non-receptor class dual specificity subfamily.

The protein localises to the cytoplasm. It is found in the nucleus. It localises to the mitochondrion inner membrane. The catalysed reaction is O-phospho-L-tyrosyl-[protein] + H2O = L-tyrosyl-[protein] + phosphate. The enzyme catalyses O-phospho-L-seryl-[protein] + H2O = L-seryl-[protein] + phosphate. It catalyses the reaction O-phospho-L-threonyl-[protein] + H2O = L-threonyl-[protein] + phosphate. Its function is as follows. Can dephosphorylate single and diphosphorylated synthetic MAPK peptides, with preference for the phosphotyrosine and diphosphorylated forms over phosphothreonine. In vitro, dephosphorylates p-nitrophenyl phosphate (pNPP). This Pongo abelii (Sumatran orangutan) protein is Dual specificity protein phosphatase 18 (DUSP18).